Here is a 662-residue protein sequence, read N- to C-terminus: Chaperone protein dnaK1 (662 aa).

A Phosphothreonine; by autocatalysis modification is found at threonine 198. The disordered stretch occupies residues 630–662; that stretch reads DWDDDPWAAPSGPPRGRSLNRRDRDPWDDDFYR. Positions 649–662 are enriched in basic and acidic residues; that stretch reads NRRDRDPWDDDFYR.

This sequence belongs to the heat shock protein 70 family.

Acts as a chaperone. This is Chaperone protein dnaK1 (dnaK1) from Parasynechococcus marenigrum (strain WH8102).